Consider the following 252-residue polypeptide: 3-dehydroquinate dehydratase (252 aa).

3-dehydroquinate contacts are provided by residues S21, 46-48 (EWR), and R82. H143 acts as the Proton donor/acceptor in catalysis. K170 functions as the Schiff-base intermediate with substrate in the catalytic mechanism. Residues R213, S232, and Q236 each coordinate 3-dehydroquinate.

It belongs to the type-I 3-dehydroquinase family. In terms of assembly, homodimer.

The enzyme catalyses 3-dehydroquinate = 3-dehydroshikimate + H2O. It functions in the pathway metabolic intermediate biosynthesis; chorismate biosynthesis; chorismate from D-erythrose 4-phosphate and phosphoenolpyruvate: step 3/7. In terms of biological role, involved in the third step of the chorismate pathway, which leads to the biosynthesis of aromatic amino acids. Catalyzes the cis-dehydration of 3-dehydroquinate (DHQ) and introduces the first double bond of the aromatic ring to yield 3-dehydroshikimate. The sequence is that of 3-dehydroquinate dehydratase from Shigella dysenteriae.